Consider the following 932-residue polypeptide: MTELKAKGPRAPHVAGGPPSPEVGSPLLCRPAAGQFPGSQTSDTLPEVSAIPISLDGLLFPRPCQGQDPSYEKTQDQQSLSDVEGAYSRAEATRGAGGSSSSPPEKESGLLDSVLDTLLAPSGPRQSQPSPPACEVTSSWSLFGPELPEDPPAAPATQGVLSPLMSRSGGKAGDSSGTAAAHKVLPQGLSPSRQLLLPASGSPHWSGAPVKPSPQPAAVEVEEEDGSESEDSAGPLLKGKPRALGGAAAGGAAAVPPGAAAGGVALVPKEDSRFSAPRVALVEQDAPMAPGRSPLATTVMDFIHVPILPLNHALLAARTRQLLEDENYDGGAGAASAFAPPRSSPSASSTPVAVGDFPDCAYPPDVEPKDDAYPLYGDFQPPALKIKEEEEGAEASARTPRSYLVAGANPAAFPDFPLGPPPPLPPRAPPSRPGEAAVTAAPASASVSSASSSGSTLECILYKAEGAPPQQGPFAPPPSKAPGAGGCLPPRDGLPSTAASASAAGAAPALYPALRLNGLPQLGYQAAVLKEGLPQVYPPYLNYLRPDSEASQSPQYSFESLPQKICLICGDEASGCHYGVLTCGSCKVFFKRAMEGQHNYLCAGRNDCIVDKIRRKNCPACRLRKCCQAGMVLGGRKFKKFNKVRVVRALDAVALPQPVGIPNESQVLSQRITFSPGQDIQLIPPLINLLMSIEPDVIYAGHDNTKPDTSSSLLTSLNQLGERQLLSVVKWSKSLPGFRNLHIDDQITLIQYSWMSLMVFGLGWRSYKHVSGQMLYFAPDLILNEQRMKESSFYSLCLTMWQIPQEFVKLQVSQEEFLCMKVLLLLNTIPLEGLRSQTQFEEMRASYIRELIKAIGLRQKGVVSSSQRFYQLTKLLDNLHDLVKQLHLYCLNTFIQSRALSVEFPEMMSEVIAAQLPKILAGMVKPLLFHKK.

Residues 1-164 (MTELKAKGPR…PATQGVLSPL (164 aa)) are AF3; mediates transcriptional activation. Residues 1 to 254 (MTELKAKGPR…GGAAAGGAAA (254 aa)) form a disordered region. The segment at 1–565 (MTELKAKGPR…YSFESLPQKI (565 aa)) is modulating, Pro-Rich. Ser20 carries the post-translational modification Phosphoserine. Positions 55-59 (LDGLL) match the LXXL motif 1 motif. The residue at position 81 (Ser81) is a Phosphoserine. Over residues 88–103 (SRAEATRGAGGSSSSP) the composition is skewed to low complexity. The LXXL motif 2 motif lies at 115–119 (LDTLL). Phosphoserine is present on residues Ser130 and Ser162. The mediates transcriptional transrepression stretch occupies residues 165 to 304 (MSRSGGKAGD…LATTVMDFIH (140 aa)). The Nuclear localization signal signature appears at 183 to 187 (KVLPQ). Ser190 and Ser213 each carry phosphoserine. Positions 220–231 (EVEEEDGSESED) are enriched in acidic residues. Residues 232–254 (SAGPLLKGKPRALGGAAAGGAAA) show a composition bias toward low complexity. The residue at position 293 (Ser293) is a Phosphoserine; by MAPK1. Over residues 334 to 349 (AASAFAPPRSSPSASS) the composition is skewed to low complexity. The segment at 334–356 (AASAFAPPRSSPSASSTPVAVGD) is disordered. At Ser344 the chain carries Phosphoserine; by MAPK. Lys387 is covalently cross-linked (Glycyl lysine isopeptide (Lys-Gly) (interchain with G-Cter in SUMO); alternate). A Glycyl lysine isopeptide (Lys-Gly) (interchain with G-Cter in ubiquitin); alternate cross-link involves residue Lys387. Disordered stretches follow at residues 414-451 (PDFP…SSAS) and 468-499 (PPQQ…STAA). Residues 417 to 432 (PLGPPPPLPPRAPPSR) are compositionally biased toward pro residues. The segment covering 433–451 (PGEAAVTAAPASASVSSAS) has biased composition (low complexity). The interval 455–545 (STLECILYKA…VYPPYLNYLR (91 aa)) is AF1; mediates transcriptional activation. Over residues 470–480 (QQGPFAPPPSK) the composition is skewed to pro residues. Lys530 participates in a covalent cross-link: Glycyl lysine isopeptide (Lys-Gly) (interchain with G-Cter in SUMO). NR C4-type zinc fingers lie at residues 566–586 (CLIC…CGSC) and 602–626 (CAGR…LRKC). Positions 566 to 638 (CLICGDEASG…AGMVLGGRKF (73 aa)) form a DNA-binding region, nuclear receptor. Ser675 carries the post-translational modification Phosphoserine. One can recognise an NR LBD domain in the interval 678-912 (QDIQLIPPLI…EFPEMMSEVI (235 aa)). The AF2; mediates transcriptional activation stretch occupies residues 686 to 932 (LINLLMSIEP…MVKPLLFHKK (247 aa)). Progesterone is bound at residue Arg765.

Belongs to the nuclear hormone receptor family. As to quaternary structure, interacts with SMARD1 and UNC45A. Interacts with CUEDC2; the interaction promotes ubiquitination, decreases sumoylation, and represses transcriptional activity. Interacts with PIAS3; the interaction promotes sumoylation of PR in a hormone-dependent manner, inhibits DNA-binding, and alters nuclear export. Interacts with SP1; the interaction requires ligand-induced phosphorylation on Ser-344 by ERK1/2-MAPK. Interacts with PRMT2. Interacts with NCOA2 and NCOA1. Interacts with KLF9. Interacts with GTF2B. In terms of processing, phosphorylated on multiple serine sites. Several of these sites are hormone-dependent. Phosphorylation on Ser-293 is highly hormone-dependent and modulates ubiquitination and sumoylation on Lys-387. Phosphorylation on Ser-102 and Ser-344 also requires induction by hormone. Basal phosphorylation on Ser-81, Ser-162 and Ser-190 is increased in response to progesterone and can be phosphorylated in vitro by the CDK2-A1 complex. Phosphorylation at Ser-162 and Ser-293, but not at Ser-190, is impaired during the G(2)/M phase of the cell cycle. Phosphorylation on Ser-344 by ERK1/2 MAPK is required for interaction with SP1. Sumoylation is hormone-dependent and represses transcriptional activity. Sumoylation on all three sites is enhanced by PIAS3. Desumoylated by SENP1. Sumoylation on Lys-387, the main site of sumoylation, is repressed by ubiquitination on the same site, and modulated by phosphorylation at Ser-293. Post-translationally, ubiquitination is hormone-dependent and represses sumoylation on the same site. Promoted by MAPK-mediated phosphorylation on Ser-293. Ubiquitinated by UBR5, leading to its degradation: UBR5 specifically recognizes and binds ligand-bound PGR when it is not associated with coactivators (NCOAs). In presence of NCOAs, the UBR5-degron is not accessible, preventing its ubiquitination and degradation. In terms of processing, palmitoylated by ZDHHC7 and ZDHHC21. Palmitoylation is required for plasma membrane targeting and for rapid intracellular signaling via ERK and AKT kinases and cAMP generation.

It localises to the nucleus. The protein localises to the cytoplasm. Its function is as follows. The steroid hormones and their receptors are involved in the regulation of eukaryotic gene expression and affect cellular proliferation and differentiation in target tissues. Transcriptional activator of several progesteron-dependent promoters in a variety of cell types. Involved in activation of SRC-dependent MAPK signaling on hormone stimulation. This chain is Progesterone receptor (PGR), found in Hylobates lar (Lar gibbon).